The primary structure comprises 119 residues: Small ribosomal subunit protein uS13 (119 aa).

The segment at 92-119 (RRGLPVRGQRTKTNARTRKGPRKAIRAR) is disordered.

This sequence belongs to the universal ribosomal protein uS13 family. In terms of assembly, part of the 30S ribosomal subunit. Forms a loose heterodimer with protein S19. Forms two bridges to the 50S subunit in the 70S ribosome.

Its function is as follows. Located at the top of the head of the 30S subunit, it contacts several helices of the 16S rRNA. In the 70S ribosome it contacts the 23S rRNA (bridge B1a) and protein L5 of the 50S subunit (bridge B1b), connecting the 2 subunits; these bridges are implicated in subunit movement. Contacts the tRNAs in the A and P-sites. This Nitrosomonas eutropha (strain DSM 101675 / C91 / Nm57) protein is Small ribosomal subunit protein uS13.